Here is a 906-residue protein sequence, read N- to C-terminus: Inter-alpha-trypsin inhibitor heavy chain H1 (906 aa).

A signal peptide spans 1–22 (MGLRGLLCVCLVSLLALQAVAA). A propeptide spanning residues 23–29 (QGSPTRN) is cleaved from the precursor. A VIT domain is found at 32–161 (GGKKRMAVDA…KATFRLTYEE (130 aa)). S-linked (Hex...) cysteine glycosylation is present at cysteine 55. The residue at position 124 (serine 124) is a Phosphoserine. The VWFA domain occupies 287–470 (NVVFVIDISS…QQLQGFYEQV (184 aa)). Phosphothreonine is present on residues threonine 397 and threonine 402. Asparagine 583 is a glycosylation site (N-linked (GlcNAc...) asparagine). The O-linked (GalNAc...) serine glycan is linked to serine 643. A glycan (O-linked (GalNAc...) threonine) is linked at threonine 648. The residue at position 667 (aspartate 667) is an Aspartate 1-(chondroitin 4-sulfate)-ester. A propeptide spanning residues 668–906 (PHFLIHVPQK…HTDYIVPDIF (239 aa)) is cleaved from the precursor. An N-linked (GlcNAc...) asparagine glycan is attached at asparagine 745.

This sequence belongs to the ITIH family. I-alpha-I plasma protease inhibitors are assembled from one or two heavy chains (HC) and one light chain, bikunin. Inter-alpha-inhibitor (I-alpha-I) is composed of ITIH1/HC1, ITIH2/HC2 and bikunin. Interacts with TNFAIP6 (via Link and CUB domains). In terms of processing, heavy chains are linked to bikunin via chondroitin 4-sulfate esterified to the alpha-carboxyl of the C-terminal aspartate after propeptide cleavage. Post-translationally, the S-linked glycan is composed of two 6-carbon sugars, possibly Glc or Gal.

It localises to the secreted. May act as a carrier of hyaluronan in serum or as a binding protein between hyaluronan and other matrix protein, including those on cell surfaces in tissues to regulate the localization, synthesis and degradation of hyaluronan which are essential to cells undergoing biological processes. The chain is Inter-alpha-trypsin inhibitor heavy chain H1 (ITIH1) from Bos taurus (Bovine).